Here is a 166-residue protein sequence, read N- to C-terminus: Putative methyltransferase Rv1506c (166 aa).

The protein belongs to the methyltransferase superfamily.

In terms of biological role, probably plays a role in host phagosome maturation arrest, as well as a role in the synthesis of acyltrehalose-containing glycolipids. The polypeptide is Putative methyltransferase Rv1506c (Mycobacterium tuberculosis (strain ATCC 25618 / H37Rv)).